The primary structure comprises 250 residues: Glycerol-1-phosphate phosphohydrolase 1 (250 aa).

Aspartate 18 acts as the Nucleophile in catalysis. Positions 18 and 20 each coordinate Mg(2+). Aspartate 20 acts as the Proton donor in catalysis. Lysine 64 is covalently cross-linked (Glycyl lysine isopeptide (Lys-Gly) (interchain with G-Cter in SUMO); alternate). Lysine 64 participates in a covalent cross-link: Glycyl lysine isopeptide (Lys-Gly) (interchain with G-Cter in ubiquitin); alternate. Serine 90 bears the Phosphoserine mark. Residue lysine 144 forms a Glycyl lysine isopeptide (Lys-Gly) (interchain with G-Cter in ubiquitin) linkage. A Mg(2+)-binding site is contributed by aspartate 179.

It belongs to the HAD-like hydrolase superfamily. DOG/GPP family. As to quaternary structure, monomer. Requires Mg(2+) as cofactor.

Its subcellular location is the cytoplasm. It is found in the nucleus. The enzyme catalyses sn-glycerol 1-phosphate + H2O = glycerol + phosphate. It carries out the reaction sn-glycerol 3-phosphate + H2O = glycerol + phosphate. Functionally, major isoform of glycerol-1-phosphate phosphohydrolase involved in glycerol biosynthesis. Plays a role in osmoadaptation and required for adaptation to anaerobic conditions. This Saccharomyces cerevisiae (strain ATCC 204508 / S288c) (Baker's yeast) protein is Glycerol-1-phosphate phosphohydrolase 1.